The following is a 66-amino-acid chain: Large ribosomal subunit protein uL29c (66 aa).

The protein belongs to the universal ribosomal protein uL29 family.

It is found in the plastid. It localises to the chloroplast. This Gracilaria tenuistipitata var. liui (Red alga) protein is Large ribosomal subunit protein uL29c.